The primary structure comprises 556 residues: Jerky protein homolog (556 aa).

The HTH psq-type domain maps to 11–62 (RGEKRKRVVLTLKEKIDICTRLEKGESRKALMQEYNVGMSTLYDIRAHKAQL). 2 consecutive DNA-binding regions (H-T-H motif) follow at residues 38–58 (RKALMQEYNVGMSTLYDIRAH) and 110–142 (PMLIEKAKDFYEQMQLTEPCVFSGGWLWRFKAR). In terms of domain architecture, HTH CENPB-type spans 77-149 (QRRTLHTPKL…KARHGIKKLD (73 aa)). Residues 213–382 (KDRLTVLMCA…VPSHVFRRAW (170 aa)) enclose the DDE-1 domain. Phosphoserine is present on S414. A disordered region spans residues 439 to 482 (SWGVAGREAEGGRPPAATSPAEVVWSSEKTPKADQDGRGDPGEG). Residues 467–479 (KTPKADQDGRGDP) are compositionally biased toward basic and acidic residues.

The protein belongs to the tigger transposable element derived protein family. Expressed ubiquitously.

The protein localises to the nucleus. Its function is as follows. May bind DNA. The polypeptide is Jerky protein homolog (Homo sapiens (Human)).